The chain runs to 494 residues: Probable cobyric acid synthase (494 aa).

Positions 249–447 (SVRIAVIRLP…LHGIFFNRRF (199 aa)) constitute a GATase cobBQ-type domain. Catalysis depends on C331, which acts as the Nucleophile. The active site involves H439.

This sequence belongs to the CobB/CobQ family. CobQ subfamily.

The protein operates within cofactor biosynthesis; adenosylcobalamin biosynthesis. Functionally, catalyzes amidations at positions B, D, E, and G on adenosylcobyrinic A,C-diamide. NH(2) groups are provided by glutamine, and one molecule of ATP is hydrogenolyzed for each amidation. The chain is Probable cobyric acid synthase from Methanopyrus kandleri (strain AV19 / DSM 6324 / JCM 9639 / NBRC 100938).